The primary structure comprises 110 residues: Carboxysome shell protein CsoS1B (110 aa).

In terms of domain architecture, BMC spans alanine 8–proline 93.

The protein belongs to the bacterial microcompartments protein family. CsoS1 subfamily. In terms of assembly, homohexamer with a small central pore. Interacts with the N-terminus (residues 1-136) of RuBisCO (CbbL).

Its subcellular location is the carboxysome. Functionally, one of shell proteins of the carboxysome, a polyhedral inclusion where RuBisCO (ribulose bisphosphate carboxylase, ccbL-ccbS) is sequestered. Assembles into hexamers which make sheets that form the facets of the polyhedral carboxysome. The shell probably limits the diffusion of CO(2) into and out of the carboxysome. There are estimated to be 540 CsoS1B proteins per carboxysome. Its function is as follows. Unlike beta-carboxysomes, alpha-carboxysomes (Cb) can form without cargo protein. CsoS2 is essential for Cb formation and is also capable of targeting foreign proteins to the Cb. The Cb shell assembles with the aid of CsoS2; CsoS1A, CsoS1B and CsoS1C form the majority of the shell while CsoS4A and CsoS4B form vertices. CsoS1D forms pseudohexamers that probably control metabolite flux into and out of the shell. The polypeptide is Carboxysome shell protein CsoS1B (Halothiobacillus neapolitanus (strain ATCC 23641 / c2) (Thiobacillus neapolitanus)).